We begin with the raw amino-acid sequence, 508 residues long: TATA box-binding protein-like 1 (508 aa).

Disordered stretches follow at residues 145 to 190, 236 to 262, and 456 to 479; these read QISY…QMHH, EPIP…PMPD, and QKKR…FDDS.

The protein belongs to the TBP family.

Its subcellular location is the nucleus. Its function is as follows. May be a general transcription factor. Plays an essential role for RNA polymerase II/ama-1 transcription in early embryos whereby it activates a subset of RNA polymerase II promoters and facilitates the reestablishment of transcription after mitosis. This chain is TATA box-binding protein-like 1, found in Caenorhabditis elegans.